Here is a 584-residue protein sequence, read N- to C-terminus: Isocitrate dehydrogenase kinase/phosphatase (584 aa).

Residues 315–321 (APGVKGM) and Lys336 contribute to the ATP site. Asp371 is an active-site residue.

The protein belongs to the AceK family.

The protein resides in the cytoplasm. The catalysed reaction is L-seryl-[isocitrate dehydrogenase] + ATP = O-phospho-L-seryl-[isocitrate dehydrogenase] + ADP + H(+). In terms of biological role, bifunctional enzyme which can phosphorylate or dephosphorylate isocitrate dehydrogenase (IDH) on a specific serine residue. This is a regulatory mechanism which enables bacteria to bypass the Krebs cycle via the glyoxylate shunt in response to the source of carbon. When bacteria are grown on glucose, IDH is fully active and unphosphorylated, but when grown on acetate or ethanol, the activity of IDH declines drastically concomitant with its phosphorylation. The polypeptide is Isocitrate dehydrogenase kinase/phosphatase (Serratia proteamaculans (strain 568)).